Here is a 142-residue protein sequence, read N- to C-terminus: MATKKKVAGLIKLQIQAGQANPAPPVGPALGQHGVNIMEFCKAYNAATENQRGQVIPVEITVYEDRSFTFALKTPPAAKLLLDAAGVGKGVAEPHKTKVVKVSWDQVREIAETKKADLNANDIDAAAKIIAGTARSMGITVE.

This sequence belongs to the universal ribosomal protein uL11 family. Part of the ribosomal stalk of the 50S ribosomal subunit. Interacts with L10 and the large rRNA to form the base of the stalk. L10 forms an elongated spine to which L12 dimers bind in a sequential fashion forming a multimeric L10(L12)X complex. In terms of processing, one or more lysine residues are methylated.

Functionally, forms part of the ribosomal stalk which helps the ribosome interact with GTP-bound translation factors. This Mycobacterium leprae (strain Br4923) protein is Large ribosomal subunit protein uL11.